We begin with the raw amino-acid sequence, 317 residues long: Transaldolase (317 aa).

Residue K132 is the Schiff-base intermediate with substrate of the active site.

It belongs to the transaldolase family. Type 1 subfamily.

The protein resides in the cytoplasm. The enzyme catalyses D-sedoheptulose 7-phosphate + D-glyceraldehyde 3-phosphate = D-erythrose 4-phosphate + beta-D-fructose 6-phosphate. The protein operates within carbohydrate degradation; pentose phosphate pathway; D-glyceraldehyde 3-phosphate and beta-D-fructose 6-phosphate from D-ribose 5-phosphate and D-xylulose 5-phosphate (non-oxidative stage): step 2/3. In terms of biological role, transaldolase is important for the balance of metabolites in the pentose-phosphate pathway. This Haemophilus influenzae (strain ATCC 51907 / DSM 11121 / KW20 / Rd) protein is Transaldolase.